A 161-amino-acid polypeptide reads, in one-letter code: 3-hydroxyacyl-[acyl-carrier-protein] dehydratase FabZ (161 aa).

Histidine 64 is a catalytic residue.

Belongs to the thioester dehydratase family. FabZ subfamily.

The protein resides in the cytoplasm. The catalysed reaction is a (3R)-hydroxyacyl-[ACP] = a (2E)-enoyl-[ACP] + H2O. In terms of biological role, involved in unsaturated fatty acids biosynthesis. Catalyzes the dehydration of short chain beta-hydroxyacyl-ACPs and long chain saturated and unsaturated beta-hydroxyacyl-ACPs. This is 3-hydroxyacyl-[acyl-carrier-protein] dehydratase FabZ from Paramagnetospirillum magneticum (strain ATCC 700264 / AMB-1) (Magnetospirillum magneticum).